Here is a 131-residue protein sequence, read N- to C-terminus: Snaclec alboaggregin-A subunit alpha (131 aa).

Positions 1 to 131 constitute a C-type lectin domain; that stretch reads DCPSDWSSYD…EYPFVCKFXR (131 aa). 3 disulfide bridges follow: C2/C13, C30/C127, and C102/C119.

This sequence belongs to the snaclec family. Heterotetramer of the subunits alpha, alpha', beta and beta'; disulfide-linked. Expressed by the venom gland.

The protein localises to the secreted. Functionally, potent platelet activator that aggregates platelets via both GPIbalpha (GP1BA) and GPVI (GP6). Induces a tyrosine phosphorylation profile in platelets that resembles this produced by collagen, involving the time dependent tyrosine phosphorylation of Fc receptor gamma chain (FCGR1A), phospholipase Cgamma2 (PLCG2), and LAT. In Trimeresurus albolabris (White-lipped pit viper), this protein is Snaclec alboaggregin-A subunit alpha.